The chain runs to 404 residues: Glucose-1-phosphate adenylyltransferase (404 aa).

Alpha-D-glucose 1-phosphate-binding positions include Tyr99, Gly164, 179–180, and Ser197; that span reads EK.

It belongs to the bacterial/plant glucose-1-phosphate adenylyltransferase family.

The enzyme catalyses alpha-D-glucose 1-phosphate + ATP + H(+) = ADP-alpha-D-glucose + diphosphate. Its pathway is capsule biogenesis; capsule polysaccharide biosynthesis. The protein operates within glycan biosynthesis; glycogen biosynthesis. In terms of biological role, involved in the biosynthesis of ADP-glucose, a building block, required in the biosynthesis of maltose-1-phosphate (M1P) and in the elongation reactions to produce linear alpha-1,4-glucans. Catalyzes the reaction between ATP and alpha-D-glucose 1-phosphate (G1P) to produce pyrophosphate and ADP-Glc. In Mycobacteroides abscessus (strain ATCC 19977 / DSM 44196 / CCUG 20993 / CIP 104536 / JCM 13569 / NCTC 13031 / TMC 1543 / L948) (Mycobacterium abscessus), this protein is Glucose-1-phosphate adenylyltransferase.